The following is a 205-amino-acid chain: Guanylate kinase (205 aa).

The 179-residue stretch at 18 to 196 (PKLFTISAPA…AYQVLRSIFI (179 aa)) folds into the Guanylate kinase-like domain. 25-32 (APAGAGKT) serves as a coordination point for ATP.

The protein belongs to the guanylate kinase family.

The protein localises to the cytoplasm. The catalysed reaction is GMP + ATP = GDP + ADP. Essential for recycling GMP and indirectly, cGMP. This chain is Guanylate kinase (gmk), found in Chlamydia muridarum (strain MoPn / Nigg).